A 136-amino-acid polypeptide reads, in one-letter code: Large ribosomal subunit protein uL16 (136 aa).

The protein belongs to the universal ribosomal protein uL16 family. As to quaternary structure, part of the 50S ribosomal subunit.

Its function is as follows. Binds 23S rRNA and is also seen to make contacts with the A and possibly P site tRNAs. This is Large ribosomal subunit protein uL16 from Shigella flexneri.